A 147-amino-acid polypeptide reads, in one-letter code: Helix-loop-helix protein 13 (147 aa).

The bHLH domain maps to 41–93; the sequence is EERQTASIRERKRMCSINVAFIELRNYIPTFPYEKRLSKIDTLNLAIAYINML.

In terms of tissue distribution, expressed in hermaphrodite dopaminergic neurons (ADE, CEP, and PDE).

Its subcellular location is the nucleus. The protein resides in the cytoplasm. Functionally, transcriptional activator. Shown to have a role in the negative regulation of exit from L1 arrest and dauer diapause dependent on IIS signaling (insulin and insulin-like growth factor (IGF) signaling). Hypodermal expression is regulated by IIS/daf-16 while neuronal expression is not under the control of IIS/daf-16. This Caenorhabditis elegans protein is Helix-loop-helix protein 13.